The following is a 990-amino-acid chain: Storkhead-box protein 1 (990 aa).

The segment covering 396 to 408 (TTRHKDSSKEVIG) has biased composition (basic and acidic residues). Disordered stretches follow at residues 396-471 (TTRH…VHHL), 562-586 (VAKA…PRRV), 712-736 (GLSD…DGGC), and 809-832 (LFSN…SRIP). Residues 416–431 (KSRRRGSSHKGRHKAR) are compositionally biased toward basic residues. The span at 809-830 (LFSNAGESPNPDLSDNPGQNSR) shows a compositional bias: polar residues.

As to expression, detected in sensory epithelial cells of the inner ear but not in adjacent surrounding tissue (at protein level).

It is found in the nucleus. Its subcellular location is the cytoplasm. It localises to the cytoskeleton. The protein resides in the microtubule organizing center. The protein localises to the centrosome. In terms of biological role, involved in regulating the levels of reactive oxidative species and reactive nitrogen species and in mitochondrial homeostasis in the placenta. Required for regulation of inner ear epithelial cell proliferation via the AKT signaling pathway. Involved in cell cycle regulation by binding to the CCNB1 promoter, up-regulating its expression and promoting mitotic entry. Induces phosphorylation of MAPT/tau. This Mus musculus (Mouse) protein is Storkhead-box protein 1.